The primary structure comprises 633 residues: Carbon catabolite-derepressing protein kinase (633 aa).

Positions 1–16 (MSSNNNTNTAPANANS) are enriched in low complexity. The interval 1 to 46 (MSSNNNTNTAPANANSSHHHHHHHHHHHHHGHGGSNSTLNNPKSSL) is disordered. Residues 17 to 32 (SHHHHHHHHHHHHHGH) are compositionally biased toward basic residues. One can recognise a Protein kinase domain in the interval 55-306 (YQIVKTLGEG…IHEIMQDDWF (252 aa)). ATP is bound by residues 61-69 (LGEGSFGKV) and K84. D177 serves as the catalytic Proton acceptor. The residue at position 210 (T210) is a Phosphothreonine; by autocatalysis. The tract at residues 313-392 (YLLPPDLKPH…YMLIKENKSL (80 aa)) is auto-inhibitory domain (AID). A disordered region spans residues 317 to 345 (PDLKPHPEEENENNDSKKDGSSPDNDEID). Over residues 319 to 337 (LKPHPEEENENNDSKKDGS) the composition is skewed to basic and acidic residues. The region spanning 348 to 389 (LVNILSSTMGYEKDEIYESLESSEDTPAFNEIRDAYMLIKEN) is the UBA domain. Positions 409–434 (FLSQSPPTFQQQSKSHQKSQVDHETA) are disordered. S413 carries the phosphoserine modification. Residue K461 forms a Glycyl lysine isopeptide (Lys-Gly) (interchain with G-Cter in ubiquitin) linkage. S487 bears the Phosphoserine mark. K549 is covalently cross-linked (Glycyl lysine isopeptide (Lys-Gly) (interchain with G-Cter in SUMO)). S632 is modified (phosphoserine).

This sequence belongs to the protein kinase superfamily. CAMK Ser/Thr protein kinase family. SNF1 subfamily. Component of the AMP-activated protein kinase complex also known as the SNF1 kinase complex (Snf1c), a heterotrimeric complex composed of an alpha subunit (SNF1), a regulatory subunit beta (GAL83 and substoichiometric alternate beta subunits SIP1 and SIP2), and a regulatory subunit gamma (SNF4). Interacts with the transcriptional activator SIP4. Interacts with SAK1. Interacts with CTK1: Interacts with adenylate cyclase CYR1. Phosphorylation at Thr-210 in response to glucose limitation leads to activation of kinase activity. ADP, but not AMP, protects the enzyme from dephosphorylation at Thr-210 by GLC7. In terms of processing, sumoylation by the SUMO (E3) ligase MMS21 leads to inhibition by interaction of SUMO attached to Lys-549 with a SUMO-interacting sequence motif located near the active site of SNF1, and by targeting SNF1 for glucose-induced destruction via the SLX5-SLX8 (SUMO-directed) ubiquitin ligase.

Its subcellular location is the cytoplasm. The protein resides in the nucleus. It localises to the nucleus membrane. It catalyses the reaction L-seryl-[protein] + ATP = O-phospho-L-seryl-[protein] + ADP + H(+). The catalysed reaction is L-threonyl-[protein] + ATP = O-phospho-L-threonyl-[protein] + ADP + H(+). Its activity is regulated as follows. The kinase activity is positively regulated by SNF4 via sequestration of the SNF1 auto-inhibitory domain (AID). Functionally, serine/threonine protein kinase essential for release from glucose repression. Catalytic subunit of the AMP-activated protein kinase complex also known as the SNF1 kinase complex (Snf1c), a central regulator of cellular energy homeostasis, which, in response to a fall in intracellular ATP levels, activates energy-producing pathways and inhibits energy-consuming processes. The complex phosphorylates histone H3 to form H3S10ph, which promotes H3K14ac formation, leading to transcriptional activation through TBP recruitment to the promoters. The complex also negatively regulates the HOG1 MAPK pathway in ER stress response including unfolded protein response (UPR). Under nutrient/energy depletion, the complex phosphorylates and activates PAS kinase PSK1 which in turn activates PBS1, leading to the inhibition of the TORC1 signaling pathway. SNF1 also interacts and phosphorylates adenylate cyclase CYR1 and negatively regulates the protein kinase A signaling pathway. Also phosphorylates and regulates the transcriptional activator CAT8. The chain is Carbon catabolite-derepressing protein kinase from Saccharomyces cerevisiae (strain ATCC 204508 / S288c) (Baker's yeast).